We begin with the raw amino-acid sequence, 819 residues long: DNA topoisomerase 4 subunit A (819 aa).

The 467-residue stretch at 30 to 496 (LPDIRDGLKP…QIIEIDTASL (467 aa)) folds into the Topo IIA-type catalytic domain. The O-(5'-phospho-DNA)-tyrosine intermediate role is filled by Tyr118.

This sequence belongs to the type II topoisomerase GyrA/ParC subunit family. ParC type 2 subfamily. In terms of assembly, heterotetramer composed of ParC and ParE.

It localises to the cell membrane. The enzyme catalyses ATP-dependent breakage, passage and rejoining of double-stranded DNA.. Functionally, topoisomerase IV is essential for chromosome segregation. It relaxes supercoiled DNA. Performs the decatenation events required during the replication of a circular DNA molecule. The chain is DNA topoisomerase 4 subunit A from Streptococcus pyogenes serotype M3 (strain ATCC BAA-595 / MGAS315).